The primary structure comprises 63 residues: Large ribosomal subunit protein bL32 (63 aa).

The disordered stretch occupies residues M1–F20. Positions K7–A18 are enriched in basic residues.

The protein belongs to the bacterial ribosomal protein bL32 family.

This Chlorobaculum tepidum (strain ATCC 49652 / DSM 12025 / NBRC 103806 / TLS) (Chlorobium tepidum) protein is Large ribosomal subunit protein bL32.